Reading from the N-terminus, the 168-residue chain is NADH-ubiquinone oxidoreductase chain 6 (168 aa).

5 consecutive transmembrane segments (helical) span residues 26–46 (LGLM…LIIF), 52–72 (LLFL…ISLI), 82–102 (VFAY…FVMK), 111–131 (SMSL…IMLY), and 134–154 (FFCY…VVKI).

It belongs to the complex I subunit 6 family.

The protein localises to the mitochondrion membrane. It catalyses the reaction a ubiquinone + NADH + 5 H(+)(in) = a ubiquinol + NAD(+) + 4 H(+)(out). Functionally, core subunit of the mitochondrial membrane respiratory chain NADH dehydrogenase (Complex I) that is believed to belong to the minimal assembly required for catalysis. Complex I functions in the transfer of electrons from NADH to the respiratory chain. The immediate electron acceptor for the enzyme is believed to be ubiquinone. In Heterololigo bleekeri (Spear squid), this protein is NADH-ubiquinone oxidoreductase chain 6 (ND6).